The sequence spans 233 residues: Leucyl/phenylalanyl-tRNA--protein transferase (233 aa).

The protein belongs to the L/F-transferase family.

Its subcellular location is the cytoplasm. The enzyme catalyses N-terminal L-lysyl-[protein] + L-leucyl-tRNA(Leu) = N-terminal L-leucyl-L-lysyl-[protein] + tRNA(Leu) + H(+). It carries out the reaction N-terminal L-arginyl-[protein] + L-leucyl-tRNA(Leu) = N-terminal L-leucyl-L-arginyl-[protein] + tRNA(Leu) + H(+). It catalyses the reaction L-phenylalanyl-tRNA(Phe) + an N-terminal L-alpha-aminoacyl-[protein] = an N-terminal L-phenylalanyl-L-alpha-aminoacyl-[protein] + tRNA(Phe). In terms of biological role, functions in the N-end rule pathway of protein degradation where it conjugates Leu, Phe and, less efficiently, Met from aminoacyl-tRNAs to the N-termini of proteins containing an N-terminal arginine or lysine. The chain is Leucyl/phenylalanyl-tRNA--protein transferase from Anaeromyxobacter dehalogenans (strain 2CP-1 / ATCC BAA-258).